Consider the following 249-residue polypeptide: MAMQMNSVVHVSTSPSPSPATSPPPEGKQEHGEVAAVHVVGVGDDEAVMVVKDEEAFGGGGVDYSGRAQWLRAAVLGANDGLVSVASLMIGVGAVSESGRAMLVSGVAGLVAGACSMAIGEFVSVYAQYDIEVAAARRRRRQRRRRCDGDGEEEGSGRLPSPFKAAAASALAFTVGALLPLLAGGFVRPWAPRVAAVCAATSAALAGFGALGAALGGASPARSAARVLLGGWAAMAACYGVLRLFANLY.

Residues 1–32 are disordered; sequence MAMQMNSVVHVSTSPSPSPATSPPPEGKQEHG. The Cytoplasmic segment spans residues 1–74; the sequence is MAMQMNSVVH…SGRAQWLRAA (74 aa). The span at 16-26 shows a compositional bias: pro residues; sequence SPSPATSPPPE. A helical transmembrane segment spans residues 75–95; that stretch reads VLGANDGLVSVASLMIGVGAV. Residues 96-102 are Vacuolar-facing; it reads SESGRAM. The helical transmembrane segment at 103-123 threads the bilayer; that stretch reads LVSGVAGLVAGACSMAIGEFV. Residues 124–166 are Cytoplasmic-facing; that stretch reads SVYAQYDIEVAAARRRRRQRRRRCDGDGEEEGSGRLPSPFKAA. Residues 167–187 traverse the membrane as a helical segment; that stretch reads AASALAFTVGALLPLLAGGFV. Over 188–193 the chain is Vacuolar; it reads RPWAPR. A helical membrane pass occupies residues 194–214; the sequence is VAAVCAATSAALAGFGALGAA. The Cytoplasmic portion of the chain corresponds to 215 to 226; the sequence is LGGASPARSAAR. Residues 227–247 traverse the membrane as a helical segment; sequence VLLGGWAAMAACYGVLRLFAN. Over 248–249 the chain is Vacuolar; the sequence is LY.

It belongs to the CCC1 family.

The protein resides in the vacuole membrane. The catalysed reaction is Fe(2+)(in) = Fe(2+)(out). Its function is as follows. Probable vacuolar iron transporter that may be involved in the regulation of iron distribution throughout the plant. This is Vacuolar iron transporter homolog 3 from Oryza sativa subsp. japonica (Rice).